The following is a 309-amino-acid chain: Syndecan-1 (309 aa).

Residues 1-22 (MRRAALWLWLCALALRLQPVLP) form the signal peptide. Over 24-253 (IMAVNVPPED…GLLDRKEVLG (230 aa)) the chain is Extracellular. Disordered stretches follow at residues 28–57 (NVPPEDQDGSGDDSDNFSGSGTGALPDITL) and 142–185 (ARAT…GGTS). Positions 32-42 (EDQDGSGDDSD) are enriched in acidic residues. S37 is a glycosylation site (O-linked (Xyl...) (chondroitin sulfate) serine). N-linked (GlcNAc...) asparagine glycosylation occurs at N43. 2 O-linked (Xyl...) (heparan sulfate) serine glycosylation sites follow: S45 and S47. Positions 142–151 (ARATTAQAPV) are enriched in polar residues. O-linked (Xyl...) (chondroitin sulfate) serine glycans are attached at residues S205 and S215. A helical membrane pass occupies residues 254-274 (GVIAGGLVGLIFAVCLVGFML). Over 275–309 (YRMKKKDEGSYSLEEPKQANGGAYQKPTKQEEFYA) the chain is Cytoplasmic. A disordered region spans residues 283 to 309 (GSYSLEEPKQANGGAYQKPTKQEEFYA). S284 carries the phosphoserine modification.

This sequence belongs to the syndecan proteoglycan family. In terms of assembly, interacts with CDCP1. Interacts (via C-terminus) with TIAM1 (via PDZ domain). Interacts with MDK. Shedding is enhanced by a number of factors such as heparanase, thrombin or EGF. Also by stress and wound healing. PMA-mediated shedding is inhibited by TIMP3.

It is found in the membrane. Its subcellular location is the secreted. It localises to the extracellular exosome. Its function is as follows. Cell surface proteoglycan that contains both heparan sulfate and chondroitin sulfate and that links the cytoskeleton to the interstitial matrix. Regulates exosome biogenesis in concert with SDCBP and PDCD6IP. Able to induce its own expression in dental mesenchymal cells and also in the neighboring dental epithelial cells via an MSX1-mediated pathway. In Cricetulus griseus (Chinese hamster), this protein is Syndecan-1.